A 550-amino-acid chain; its full sequence is Gamma-aminobutyric acid receptor subunit beta (550 aa).

The signal sequence occupies residues 1 to 24 (MRRSKTRRIFHVSITLLLVSTIFC). The Extracellular portion of the chain corresponds to 25–264 (QNGTKPHNNS…FQLRRSVGYF (240 aa)). N-linked (GlcNAc...) asparagine glycosylation is found at Asn26, Asn32, Asn33, Asn45, Asn53, and Asn193. Residues Cys180 and Cys194 are joined by a disulfide bond. A run of 3 helical transmembrane segments spans residues 265 to 285 (IFQT…SFWI), 292 to 311 (ARVA…STGV), and 324 to 344 (IDIY…EYAA). At 345-527 (VNYSYWGRER…DVNLIDKYSR (183 aa)) the chain is on the cytoplasmic side. Positions 405–465 (AMSTSNTAAQ…TTSLKGARPH (61 aa)) are disordered. Residues 406–421 (MSTSNTAAQNNNFEST) are compositionally biased toward polar residues. The chain crosses the membrane as a helical span at residues 528–548 (VVFPVCFIVFNLFYWSYYMMV).

The protein belongs to the ligand-gated ion channel (TC 1.A.9) family. Gamma-aminobutyric acid receptor (TC 1.A.9.5) subfamily.

It is found in the postsynaptic cell membrane. Its subcellular location is the cell membrane. In terms of biological role, GABA, an inhibitory neurotransmitter, mediates neuronal inhibition by binding to the GABA receptor and opening an integral chloride channel. In Caenorhabditis elegans, this protein is Gamma-aminobutyric acid receptor subunit beta (gab-1).